The sequence spans 425 residues: Histidine--tRNA ligase (425 aa).

This sequence belongs to the class-II aminoacyl-tRNA synthetase family. Homodimer.

The protein resides in the cytoplasm. The catalysed reaction is tRNA(His) + L-histidine + ATP = L-histidyl-tRNA(His) + AMP + diphosphate + H(+). The sequence is that of Histidine--tRNA ligase from Streptomyces coelicolor (strain ATCC BAA-471 / A3(2) / M145).